The chain runs to 978 residues: Glycine dehydrogenase (decarboxylating) (978 aa).

Position 726 is an N6-(pyridoxal phosphate)lysine (Lys726).

This sequence belongs to the GcvP family. As to quaternary structure, the glycine cleavage system is composed of four proteins: P, T, L and H. Requires pyridoxal 5'-phosphate as cofactor.

The catalysed reaction is N(6)-[(R)-lipoyl]-L-lysyl-[glycine-cleavage complex H protein] + glycine + H(+) = N(6)-[(R)-S(8)-aminomethyldihydrolipoyl]-L-lysyl-[glycine-cleavage complex H protein] + CO2. Functionally, the glycine cleavage system catalyzes the degradation of glycine. The P protein binds the alpha-amino group of glycine through its pyridoxal phosphate cofactor; CO(2) is released and the remaining methylamine moiety is then transferred to the lipoamide cofactor of the H protein. The polypeptide is Glycine dehydrogenase (decarboxylating) (Paraburkholderia phytofirmans (strain DSM 17436 / LMG 22146 / PsJN) (Burkholderia phytofirmans)).